The sequence spans 314 residues: Tetraacyldisaccharide 4'-kinase (314 aa).

61–68 (IVGGSGKT) contributes to the ATP binding site.

Belongs to the LpxK family.

It catalyses the reaction a lipid A disaccharide + ATP = a lipid IVA + ADP + H(+). Its pathway is glycolipid biosynthesis; lipid IV(A) biosynthesis; lipid IV(A) from (3R)-3-hydroxytetradecanoyl-[acyl-carrier-protein] and UDP-N-acetyl-alpha-D-glucosamine: step 6/6. Functionally, transfers the gamma-phosphate of ATP to the 4'-position of a tetraacyldisaccharide 1-phosphate intermediate (termed DS-1-P) to form tetraacyldisaccharide 1,4'-bis-phosphate (lipid IVA). This chain is Tetraacyldisaccharide 4'-kinase, found in Aliarcobacter butzleri (strain RM4018) (Arcobacter butzleri).